A 697-amino-acid polypeptide reads, in one-letter code: Polyribonucleotide nucleotidyltransferase (697 aa).

Mg(2+)-binding residues include D487 and D493. Positions 554–613 (PRIETIQIKPSKIAVVIGPGGKQIRAIIEQTGVQIDIDDTGLVNIAAIDLVSIEKAKAII) constitute a KH domain. Residues 623–691 (GRIYSGKAIS…ERGQIKLSRK (69 aa)) enclose the S1 motif domain.

It belongs to the polyribonucleotide nucleotidyltransferase family. Requires Mg(2+) as cofactor.

The protein localises to the cytoplasm. It catalyses the reaction RNA(n+1) + phosphate = RNA(n) + a ribonucleoside 5'-diphosphate. In terms of biological role, involved in mRNA degradation. Catalyzes the phosphorolysis of single-stranded polyribonucleotides processively in the 3'- to 5'-direction. This Protochlamydia amoebophila (strain UWE25) protein is Polyribonucleotide nucleotidyltransferase.